Consider the following 352-residue polypeptide: C-C chemokine receptor type 5 (352 aa).

The Extracellular portion of the chain corresponds to M1–A30. Y3 bears the Sulfotyrosine mark. Residues S6 and S7 are each glycosylated (O-linked (GalNAc...) serine). Residues Y10, Y14, and Y15 each carry the sulfotyrosine modification. 2 disulfide bridges follow: C20–C269 and C101–C178. A helical membrane pass occupies residues R31–C58. The Cytoplasmic portion of the chain corresponds to K59 to Y68. Residues L69–Y89 form a helical membrane-spanning segment. Residues A90–Q102 lie on the Extracellular side of the membrane. The chain crosses the membrane as a helical span at residues L103 to I124. Residues D125–T141 lie on the Cytoplasmic side of the membrane. Residues V142–F166 form a helical membrane-spanning segment. At T167–I198 the chain is on the extracellular side. Residues V199–L218 traverse the membrane as a helical segment. At K219–R235 the chain is on the cytoplasmic side. The helical transmembrane segment at L236–F260 threads the bilayer. The Extracellular portion of the chain corresponds to Q261–Q277. Residues A278 to G301 traverse the membrane as a helical segment. The Cytoplasmic segment spans residues E302 to L352. S-palmitoyl cysteine attachment occurs at residues C321, C323, and C324. A phosphoserine; by BARK1 mark is found at S336, S337, S342, and S349.

Belongs to the G-protein coupled receptor 1 family. As to quaternary structure, interacts with PRAF2. Efficient ligand binding to CCL3/MIP-1alpha and CCL4/MIP-1beta requires sulfation, O-glycosylation and sialic acid modifications. Glycosylation on Ser-6 is required for efficient binding of CCL4. Interacts with GRK2. Interacts with ARRB1 and ARRB2. Interacts with CNIH4. Interacts with S100A4; this interaction stimulates T-lymphocyte chemotaxis. Post-translationally, sulfated on at least 2 of the N-terminal tyrosines. Sulfation is required for efficient binding of the chemokines, CCL3 and CCL4. In terms of processing, palmitoylation in the C-terminal is important for cell surface expression. Phosphorylation on serine residues in the C-terminal is stimulated by binding CC chemokines especially by APO-RANTES. Post-translationally, O-glycosylated, but not N-glycosylated. Ser-6 appears to be the major site even if Ser-7 may be also O-glycosylated. Also sialylated glycans present which contribute to chemokine binding. Thr-16 and Ser-17 may also be glycosylated and, if so, with small moieties such as a T-antigen.

It is found in the cell membrane. In terms of biological role, receptor for a number of inflammatory CC-chemokines including CCL3/MIP-1-alpha, CCL4/MIP-1-beta and RANTES and subsequently transduces a signal by increasing the intracellular calcium ion level. May play a role in the control of granulocytic lineage proliferation or differentiation. Participates in T-lymphocyte migration to the infection site by acting as a chemotactic receptor. In Trachypithecus francoisi (Francois' leaf monkey), this protein is C-C chemokine receptor type 5 (CCR5).